Consider the following 475-residue polypeptide: Stromelysin-1 (475 aa).

Positions 1-17 (MKGLPVLLWLCTAVCSS) are cleaved as a signal peptide. Residues 18–97 (YPLHGSEEDA…PRCGVPDVGG (80 aa)) constitute a propeptide, activation peptide. The Cysteine switch signature appears at 88–95 (PRCGVPDV). Cys90 provides a ligand contact to Zn(2+). Asn118 is a glycosylation site (N-linked (GlcNAc...) asparagine). Residues Asp122 and Asp156 each contribute to the Ca(2+) site. Residues His166 and Asp168 each coordinate Zn(2+). Ca(2+) contacts are provided by Asp173, Gly174, Gly176, and Val178. Residue His181 coordinates Zn(2+). Residues Gly188, Asn190, and Asp192 each coordinate Ca(2+). Zn(2+) is bound at residue His194. Ca(2+)-binding residues include Asp196, Asp197, and Glu199. Position 216 (His216) interacts with Zn(2+). Glu217 is a catalytic residue. Residues His220 and His226 each contribute to the Zn(2+) site. Hemopexin repeat units lie at residues 285 to 334 (LPMC…WPSL), 335 to 381 (PSNM…GLPE), 383 to 431 (VQKI…FPGI), and 432 to 475 (GTKV…WFNC). Cys288 and Cys475 form a disulfide bridge. A Ca(2+)-binding site is contributed by Asp295. Residues Asp387 and Asp436 each contribute to the Ca(2+) site.

Belongs to the peptidase M10A family. Ca(2+) serves as cofactor. The cofactor is Zn(2+).

The protein localises to the secreted. The protein resides in the extracellular space. It is found in the extracellular matrix. It catalyses the reaction Preferential cleavage where P1', P2' and P3' are hydrophobic residues.. With respect to regulation, inhibited by a synthetic peptide corresponding to the inhibitory cysteine switch motif. Inhibited by ethylenediaminetetraacetic acid (EDTA), 1,10-pheanthroline, 2-mecaptoethanol, dithiothreitol and metalloproteinase inhibitor protein TIMP. Can degrade fibronectin, laminin, gelatins of type I, III, IV, and V; collagens III, IV, X, and IX, and cartilage proteoglycans. Activates procollagenase. In terms of biological role, metalloproteinase with a rather broad substrate specificity that can degrade fibronectin, laminin, gelatins of type I, III, IV, and V; collagens III, IV, X, and IX, and cartilage proteoglycans. Activates different molecules including growth factors, plasminogen or other matrix metalloproteinases such as MMP9. Once released into the extracellular matrix (ECM), the inactive pro-enzyme is activated by the plasmin cascade signaling pathway. Also acts intracellularly. For example, in dopaminergic neurons, gets activated by the serine protease HTRA2 upon stress and plays a pivotal role in DA neuronal degeneration by mediating microglial activation and alpha-synuclein/SNCA cleavage. In addition, plays a role in immune response and possesses antiviral activity against various viruses. Mechanistically, translocates from the cytoplasm into the cell nucleus upon virus infection to influence NF-kappa-B activities. This is Stromelysin-1 (Mmp3) from Rattus norvegicus (Rat).